Here is a 142-residue protein sequence, read N- to C-terminus: MVLSPADKTNVKTAWGKVGGHAGDYGAEALERMFLSFPTTKTYFPHFDLSHGSAQVKGHGKKVADALSNAVAHVDDMPNALSALSDLHAHKLRVDPVNFKLLSHCLLVTLAAHHPADFTPAVHASLDKFLASVSTVLTSKYR.

Positions Val-2 to Arg-142 constitute a Globin domain. Phosphoserine is present on Ser-4. Lys-8 carries the N6-succinyllysine modification. A Phosphothreonine modification is found at Thr-9. Lys-12 bears the N6-succinyllysine mark. Lys-17 is modified (N6-acetyllysine; alternate). Position 17 is an N6-succinyllysine; alternate (Lys-17). A Phosphotyrosine modification is found at Tyr-25. Ser-36 is subject to Phosphoserine. N6-succinyllysine is present on Lys-41. Ser-50 carries the phosphoserine modification. Residue His-59 participates in O2 binding. Residue His-88 participates in heme b binding. Ser-103 is modified (phosphoserine). At Thr-109 the chain carries Phosphothreonine. Residues Ser-125 and Ser-132 each carry the phosphoserine modification. Thr-135 and Thr-138 each carry phosphothreonine. Ser-139 bears the Phosphoserine mark.

This sequence belongs to the globin family. Heterotetramer of two alpha chains and two beta chains. Red blood cells.

Its function is as follows. Involved in oxygen transport from the lung to the various peripheral tissues. Hemopressin acts as an antagonist peptide of the cannabinoid receptor CNR1. Hemopressin-binding efficiently blocks cannabinoid receptor CNR1 and subsequent signaling. This Sapajus apella (Brown-capped capuchin) protein is Hemoglobin subunit alpha (HBA).